Reading from the N-terminus, the 538-residue chain is CTP synthase (538 aa).

Residues 1–267 (MDRAKFIFVT…LTPIARRFNL (267 aa)) form an amidoligase domain region. Residue Ser-15 participates in CTP binding. Position 15 (Ser-15) interacts with UTP. ATP contacts are provided by residues 16-21 (SLGKGI) and Asp-73. Positions 73 and 141 each coordinate Mg(2+). CTP is bound by residues 148–150 (DME), 188–193 (KTKPTQ), and Lys-224. UTP-binding positions include 188–193 (KTKPTQ) and Lys-224. The Glutamine amidotransferase type-1 domain occupies 292 to 538 (KIGFVGKYLS…DFIKSALSKS (247 aa)). Gly-351 serves as a coordination point for L-glutamine. Cys-378 acts as the Nucleophile; for glutamine hydrolysis in catalysis. Residues 379 to 382 (LGMQ), Glu-402, and Arg-469 each bind L-glutamine. Residues His-513 and Glu-515 contribute to the active site.

The protein belongs to the CTP synthase family. Homotetramer.

The catalysed reaction is UTP + L-glutamine + ATP + H2O = CTP + L-glutamate + ADP + phosphate + 2 H(+). It catalyses the reaction L-glutamine + H2O = L-glutamate + NH4(+). The enzyme catalyses UTP + NH4(+) + ATP = CTP + ADP + phosphate + 2 H(+). The protein operates within pyrimidine metabolism; CTP biosynthesis via de novo pathway; CTP from UDP: step 2/2. Allosterically activated by GTP, when glutamine is the substrate; GTP has no effect on the reaction when ammonia is the substrate. The allosteric effector GTP functions by stabilizing the protein conformation that binds the tetrahedral intermediate(s) formed during glutamine hydrolysis. Inhibited by the product CTP, via allosteric rather than competitive inhibition. Catalyzes the ATP-dependent amination of UTP to CTP with either L-glutamine or ammonia as the source of nitrogen. Regulates intracellular CTP levels through interactions with the four ribonucleotide triphosphates. The polypeptide is CTP synthase (Helicobacter pylori (strain ATCC 700392 / 26695) (Campylobacter pylori)).